Here is a 200-residue protein sequence, read N- to C-terminus: ATP-dependent Clp protease proteolytic subunit 2 (200 aa).

Residue Ser99 is the Nucleophile of the active site. Residue His123 is part of the active site.

It belongs to the peptidase S14 family. Fourteen ClpP subunits assemble into 2 heptameric rings which stack back to back to give a disk-like structure with a central cavity, resembling the structure of eukaryotic proteasomes.

It localises to the cytoplasm. The enzyme catalyses Hydrolysis of proteins to small peptides in the presence of ATP and magnesium. alpha-casein is the usual test substrate. In the absence of ATP, only oligopeptides shorter than five residues are hydrolyzed (such as succinyl-Leu-Tyr-|-NHMec, and Leu-Tyr-Leu-|-Tyr-Trp, in which cleavage of the -Tyr-|-Leu- and -Tyr-|-Trp bonds also occurs).. Its function is as follows. Cleaves peptides in various proteins in a process that requires ATP hydrolysis. Has a chymotrypsin-like activity. Plays a major role in the degradation of misfolded proteins. This is ATP-dependent Clp protease proteolytic subunit 2 from Symbiobacterium thermophilum (strain DSM 24528 / JCM 14929 / IAM 14863 / T).